A 66-amino-acid polypeptide reads, in one-letter code: Large ribosomal subunit protein bL31 (66 aa).

The Zn(2+) site is built by Cys16, Cys18, Cys36, and Cys39.

Belongs to the bacterial ribosomal protein bL31 family. Type A subfamily. As to quaternary structure, part of the 50S ribosomal subunit. It depends on Zn(2+) as a cofactor.

Functionally, binds the 23S rRNA. The chain is Large ribosomal subunit protein bL31 from Geobacillus sp. (strain WCH70).